Here is a 225-residue protein sequence, read N- to C-terminus: Cell division protein SepF (225 aa).

The tract at residues 21–134 (DEYLDEPEPT…GPLFDEGGPL (114 aa)) is disordered. 3 stretches are compositionally biased toward basic and acidic residues: residues 28 to 54 (EPTR…RDFA), 77 to 86 (RYESPRHSSR), and 115 to 127 (TRSD…RGPL).

It belongs to the SepF family. As to quaternary structure, homodimer. Interacts with FtsZ.

Its subcellular location is the cytoplasm. In terms of biological role, cell division protein that is part of the divisome complex and is recruited early to the Z-ring. Probably stimulates Z-ring formation, perhaps through the cross-linking of FtsZ protofilaments. Its function overlaps with FtsA. In Rhodococcus opacus (strain B4), this protein is Cell division protein SepF.